A 249-amino-acid polypeptide reads, in one-letter code: uncharacterized protein (249 aa).

This is an uncharacterized protein from Escherichia coli O6:H1 (strain CFT073 / ATCC 700928 / UPEC).